The following is a 440-amino-acid chain: Chromosome partition protein MukF (440 aa).

Residues 208-236 are leucine-zipper; that stretch reads LSETSGTLRELQDTLEAAGDKLQANLLRI.

Belongs to the MukF family. As to quaternary structure, interacts, and probably forms a ternary complex, with MukE and MukB via its C-terminal region. The complex formation is stimulated by calcium or magnesium. It is required for an interaction between MukE and MukB.

It is found in the cytoplasm. The protein localises to the nucleoid. Functionally, involved in chromosome condensation, segregation and cell cycle progression. May participate in facilitating chromosome segregation by condensation DNA from both sides of a centrally located replisome during cell division. Not required for mini-F plasmid partitioning. Probably acts via its interaction with MukB and MukE. Overexpression results in anucleate cells. It has a calcium binding activity. This chain is Chromosome partition protein MukF, found in Edwardsiella ictaluri (strain 93-146).